The sequence spans 317 residues: Transaldolase (317 aa).

Lysine 132 (schiff-base intermediate with substrate) is an active-site residue.

It belongs to the transaldolase family. Type 1 subfamily. In terms of assembly, homodimer.

Its subcellular location is the cytoplasm. The enzyme catalyses D-sedoheptulose 7-phosphate + D-glyceraldehyde 3-phosphate = D-erythrose 4-phosphate + beta-D-fructose 6-phosphate. Its pathway is carbohydrate degradation; pentose phosphate pathway; D-glyceraldehyde 3-phosphate and beta-D-fructose 6-phosphate from D-ribose 5-phosphate and D-xylulose 5-phosphate (non-oxidative stage): step 2/3. In terms of biological role, transaldolase is important for the balance of metabolites in the pentose-phosphate pathway. This is Transaldolase from Actinobacillus succinogenes (strain ATCC 55618 / DSM 22257 / CCUG 43843 / 130Z).